Reading from the N-terminus, the 526-residue chain is Probable rhamnogalacturonase B (526 aa).

The signal sequence occupies residues 1 to 20 (MHVNTLSVLSLVGLVPLAAA). Cys41 and Cys67 are disulfide-bonded. Asn144 is a glycosylation site (N-linked (GlcNAc...) asparagine). The active-site Proton donor is the Asp218. The cysteines at positions 220 and 237 are disulfide-linked. N-linked (GlcNAc...) asparagine glycans are attached at residues Asn238 and Asn253. Residue His293 is part of the active site. N-linked (GlcNAc...) asparagine glycosylation occurs at Asn320. Cystine bridges form between Cys343-Cys349 and Cys371-Cys380.

This sequence belongs to the glycosyl hydrolase 28 family.

The protein resides in the secreted. It catalyses the reaction Endohydrolysis of alpha-D-GalA-(1-&gt;2)-alpha-L-Rha glycosidic bond in the rhamnogalacturonan I backbone with initial inversion of anomeric configuration releasing oligosaccharides with beta-D-GalA at the reducing end.. In terms of biological role, pectinolytic enzymes consist of four classes of enzymes: pectine lyase, polygalacturonase, pectin methylesterase and rhamnogalacturonase. Hydrolyzes alpha-D-galacturonopyranosyl-(1,2)-alpha-L-rhamnopyranosyl linkages in the backbone of the hairy regions of pectins. This Aspergillus terreus (strain NIH 2624 / FGSC A1156) protein is Probable rhamnogalacturonase B (rhgB).